Reading from the N-terminus, the 161-residue chain is Nucleotide-binding protein ABO_0048 (161 aa).

It belongs to the YajQ family.

In terms of biological role, nucleotide-binding protein. This is Nucleotide-binding protein ABO_0048 from Alcanivorax borkumensis (strain ATCC 700651 / DSM 11573 / NCIMB 13689 / SK2).